A 190-amino-acid polypeptide reads, in one-letter code: Large ribosomal subunit protein uL5 (190 aa).

This sequence belongs to the universal ribosomal protein uL5 family. In terms of assembly, part of the 50S ribosomal subunit; part of the 5S rRNA/L5/L18/L25 subcomplex. Contacts the 5S rRNA and the P site tRNA. Forms a bridge to the 30S subunit in the 70S ribosome.

Its function is as follows. This is one of the proteins that bind and probably mediate the attachment of the 5S RNA into the large ribosomal subunit, where it forms part of the central protuberance. In the 70S ribosome it contacts protein S13 of the 30S subunit (bridge B1b), connecting the 2 subunits; this bridge is implicated in subunit movement. Contacts the P site tRNA; the 5S rRNA and some of its associated proteins might help stabilize positioning of ribosome-bound tRNAs. The protein is Large ribosomal subunit protein uL5 of Corynebacterium efficiens (strain DSM 44549 / YS-314 / AJ 12310 / JCM 11189 / NBRC 100395).